Here is a 373-residue protein sequence, read N- to C-terminus: tRNA (guanine(26)-N(2))-dimethyltransferase (373 aa).

The Trm1 methyltransferase domain occupies 2 to 365; it reads KIISEGETKL…AELSDLVVLI (364 aa). The S-adenosyl-L-methionine site is built by Arg-35, Arg-66, Asp-86, Asp-113, and Ala-114.

It belongs to the class I-like SAM-binding methyltransferase superfamily. Trm1 family.

It catalyses the reaction guanosine(26) in tRNA + 2 S-adenosyl-L-methionine = N(2)-dimethylguanosine(26) in tRNA + 2 S-adenosyl-L-homocysteine + 2 H(+). Dimethylates a single guanine residue at position 26 of a number of tRNAs using S-adenosyl-L-methionine as donor of the methyl groups. The sequence is that of tRNA (guanine(26)-N(2))-dimethyltransferase from Methanococcus maripaludis (strain C7 / ATCC BAA-1331).